Consider the following 152-residue polypeptide: MSAATEQQNNGDVAVEKVAADDVSAVKDDLKAKAAAEDKAAAADAAGDAADNGTSKDGEDAADAAAAAPAKESVKGTKRPAEAKSAESKKAKKAAAADGDSDEEEALEEIIEGDSEIESDEYDIPYDGEEDDIECDDDDDDNDDGSGSDDQA.

Residues D29 to A41 show a composition bias toward basic and acidic residues. A disordered region spans residues D29–A152. A compositionally biased stretch (low complexity) spans A42–D51. Residues E72 to K89 are compositionally biased toward basic and acidic residues. The span at G99–A152 shows a compositional bias: acidic residues.

In terms of tissue distribution, expressed in the brain.

It is found in the nucleus. Negatively regulates tyramine beta-hydroxylase tbh and thus the conversion of tyramine (TA) to octopamine (OA). In tyrosine decarboxylase 2 (Tdc2) neurons, acts in an amine-mediated signaling pathway to negatively regulate acute ethanol sensitivity probably via tbh-mediated depletion of TA. The polypeptide is Bacchus (Drosophila melanogaster (Fruit fly)).